Reading from the N-terminus, the 233-residue chain is 2,3,4,5-tetrahydropyridine-2,6-dicarboxylate N-acetyltransferase (233 aa).

Belongs to the transferase hexapeptide repeat family. DapH subfamily.

It catalyses the reaction (S)-2,3,4,5-tetrahydrodipicolinate + acetyl-CoA + H2O = L-2-acetamido-6-oxoheptanedioate + CoA. It functions in the pathway amino-acid biosynthesis; L-lysine biosynthesis via DAP pathway; LL-2,6-diaminopimelate from (S)-tetrahydrodipicolinate (acetylase route): step 1/3. Its function is as follows. Catalyzes the transfer of an acetyl group from acetyl-CoA to tetrahydrodipicolinate. This Thermotoga petrophila (strain ATCC BAA-488 / DSM 13995 / JCM 10881 / RKU-1) protein is 2,3,4,5-tetrahydropyridine-2,6-dicarboxylate N-acetyltransferase.